A 121-amino-acid polypeptide reads, in one-letter code: Small ribosomal subunit protein uS13 (121 aa).

The disordered stretch occupies residues 92-121; it reads RKGLPMRGQRTRTNARTRKGPRRAAQALKK.

It belongs to the universal ribosomal protein uS13 family. In terms of assembly, part of the 30S ribosomal subunit. Forms a loose heterodimer with protein S19. Forms two bridges to the 50S subunit in the 70S ribosome.

Functionally, located at the top of the head of the 30S subunit, it contacts several helices of the 16S rRNA. In the 70S ribosome it contacts the 23S rRNA (bridge B1a) and protein L5 of the 50S subunit (bridge B1b), connecting the 2 subunits; these bridges are implicated in subunit movement. Contacts the tRNAs in the A and P-sites. This is Small ribosomal subunit protein uS13 from Burkholderia cenocepacia (strain ATCC BAA-245 / DSM 16553 / LMG 16656 / NCTC 13227 / J2315 / CF5610) (Burkholderia cepacia (strain J2315)).